We begin with the raw amino-acid sequence, 112 residues long: DNA-binding protein PF1087 (112 aa).

It belongs to the PDCD5 family.

The protein is DNA-binding protein PF1087 of Pyrococcus furiosus (strain ATCC 43587 / DSM 3638 / JCM 8422 / Vc1).